The primary structure comprises 419 residues: UDP-N-acetylglucosamine 1-carboxyvinyltransferase 2 (419 aa).

Lys22–Asn23 provides a ligand contact to phosphoenolpyruvate. Arg92 contacts UDP-N-acetyl-alpha-D-glucosamine. Residue Cys116 is the Proton donor of the active site. Cys116 is modified (2-(S-cysteinyl)pyruvic acid O-phosphothioketal). Residues Arg121–Leu125, Asp306, and Ile328 each bind UDP-N-acetyl-alpha-D-glucosamine.

This sequence belongs to the EPSP synthase family. MurA subfamily.

The protein localises to the cytoplasm. The catalysed reaction is phosphoenolpyruvate + UDP-N-acetyl-alpha-D-glucosamine = UDP-N-acetyl-3-O-(1-carboxyvinyl)-alpha-D-glucosamine + phosphate. The protein operates within cell wall biogenesis; peptidoglycan biosynthesis. Its function is as follows. Cell wall formation. Adds enolpyruvyl to UDP-N-acetylglucosamine. This is UDP-N-acetylglucosamine 1-carboxyvinyltransferase 2 from Streptococcus pyogenes serotype M1.